A 204-amino-acid chain; its full sequence is Superoxide dismutase [Mn] (204 aa).

Histidine 27 lines the Mn(2+) pocket. Phosphothreonine occurs at positions 34 and 70. Mn(2+) is bound by residues histidine 82, aspartate 164, and histidine 168.

It belongs to the iron/manganese superoxide dismutase family. In terms of assembly, homodimer. Mn(2+) serves as cofactor.

The catalysed reaction is 2 superoxide + 2 H(+) = H2O2 + O2. Destroys superoxide anion radicals which are normally produced within the cells and which are toxic to biological systems. In Geobacillus stearothermophilus (Bacillus stearothermophilus), this protein is Superoxide dismutase [Mn] (sodA).